Here is a 352-residue protein sequence, read N- to C-terminus: Alanine racemase (352 aa).

K33 functions as the Proton acceptor; specific for D-alanine in the catalytic mechanism. K33 carries the post-translational modification N6-(pyridoxal phosphate)lysine. A substrate-binding site is contributed by R129. Y250 acts as the Proton acceptor; specific for L-alanine in catalysis. M298 provides a ligand contact to substrate.

This sequence belongs to the alanine racemase family. Requires pyridoxal 5'-phosphate as cofactor.

It catalyses the reaction L-alanine = D-alanine. It functions in the pathway amino-acid biosynthesis; D-alanine biosynthesis; D-alanine from L-alanine: step 1/1. Functionally, catalyzes the interconversion of L-alanine and D-alanine. May also act on other amino acids. The sequence is that of Alanine racemase (alr) from Neisseria meningitidis serogroup B (strain ATCC BAA-335 / MC58).